The primary structure comprises 409 residues: Phospholipase ABHD3 (409 aa).

Residues 26 to 46 form a helical; Signal-anchor for type II membrane protein membrane-spanning segment; it reads GFFGSGVGLSLILGFSVAYAF. Residues 140 to 233 form the AB hydrolase-1 domain; the sequence is PTILLLPGLT…MLLLNYLGKI (94 aa). Catalysis depends on charge relay system residues Ser-220, Asp-346, and His-375.

The protein belongs to the AB hydrolase superfamily. AB hydrolase 4 family.

It is found in the membrane. It carries out the reaction a 1,2-diacyl-sn-glycero-3-phosphocholine + H2O = a 1-acyl-sn-glycero-3-phosphocholine + a fatty acid + H(+). The catalysed reaction is a 1,2-diacyl-sn-glycero-3-phosphocholine + H2O = a 2-acyl-sn-glycero-3-phosphocholine + a fatty acid + H(+). The enzyme catalyses 1-tetradecanoyl-2-(9Z,12Z-octadecadienoyl)-sn-glycero-3-phosphocholine + H2O = 2-(9Z,12Z-octadecadienoyl)-sn-glycero-3-phosphocholine + tetradecanoate + H(+). It catalyses the reaction 1-tetradecanoyl-2-(9Z,12Z-octadecadienoyl)-sn-glycero-3-phosphocholine + H2O = 1-tetradecanoyl-sn-glycero-3-phosphocholine + (9Z,12Z)-octadecadienoate + H(+). It carries out the reaction 1-tetradecanoyl-2-(5Z,8Z,11Z,14Z-eicosatetraenoyl)-sn-glycero-3-phosphocholine + H2O = 2-(5Z,8Z,11Z,14Z)-eicosatetraenoyl-sn-glycero-3-phosphocholine + tetradecanoate + H(+). The catalysed reaction is 1-tetradecanoyl-2-(4Z,7Z,10Z,13Z,16Z,19Z-docosahexaenoyl)-sn-glycero-3-phosphocholine + H2O = 2-(4Z,7Z,10Z,13Z,16Z,19Z-docosahexaenoyl)-sn-glycero-3-phosphocholine + tetradecanoate + H(+). The enzyme catalyses 1,2-ditetradecanoyl-sn-glycero-3-phosphocholine + H2O = 2-tetradecanoyl-sn-glycero-3-phosphocholine + tetradecanoate + H(+). It catalyses the reaction 1-octadecanoyl-2-acetyl-sn-glycero-3-phosphocholine + H2O = 1-octadecanoyl-sn-glycero-3-phosphocholine + acetate + H(+). It carries out the reaction 1,2-ditetradecanoyl-sn-glycero-3-phosphocholine + H2O = 1-tetradecanoyl-sn-glycero-3-phosphocholine + tetradecanoate + H(+). The catalysed reaction is 1-octadecanoyl-2-pentanoyl-sn-glycero-3-phosphocholine + H2O = pentanoate + 1-octadecanoyl-sn-glycero-3-phosphocholine + H(+). The enzyme catalyses 1-octadecanoyl-2-hexanoyl-sn-glycero-3-phosphocholine + H2O = hexanoate + 1-octadecanoyl-sn-glycero-3-phosphocholine + H(+). It catalyses the reaction 1-octadecanoyl-2-octanoyl-sn-glycero-3-phosphocholine + H2O = 1-octadecanoyl-sn-glycero-3-phosphocholine + octanoate + H(+). It carries out the reaction 1-octadecanoyl-2-nonanoyl-sn-glycero-3-phosphocholine + H2O = nonanoate + 1-octadecanoyl-sn-glycero-3-phosphocholine + H(+). The catalysed reaction is 1-O-hexadecyl-2-nonadioyl-sn-glycero-3-phosphocholine + H2O = nonanedioate + 1-O-hexadecyl-sn-glycero-3-phosphocholine + H(+). The enzyme catalyses 1-hexadecanoyl-2-nonadioyl-sn-glycero-3-phosphocholine + H2O = nonanedioate + 1-hexadecanoyl-sn-glycero-3-phosphocholine + H(+). It catalyses the reaction 1-hexadecanoyl-2-(9-oxononanoyl)-sn-glycero-3-phosphocholine + H2O = 9-oxononanoate + 1-hexadecanoyl-sn-glycero-3-phosphocholine + H(+). It carries out the reaction 1-hexadecanoyl-2-(5-oxopentanoyl)-sn-glycero-3-phosphocholine + H2O = 5-oxopentanoate + 1-hexadecanoyl-sn-glycero-3-phosphocholine + H(+). The catalysed reaction is 1-hexadecanoyl-2-glutaroyl-sn-glycero-3-phosphocholine + H2O = glutarate + 1-hexadecanoyl-sn-glycero-3-phosphocholine + H(+). The enzyme catalyses 1-O-hexadecyl-2-acetyl-sn-glycero-3-phosphocholine + H2O = 1-O-hexadecyl-sn-glycero-3-phosphocholine + acetate + H(+). Functionally, phospholipase that may play a role in phospholipids remodeling. May selectively cleave myristate (C14)-containing phosphatidylcholines through its predominant phospholipase 1 activity, cleaving preferentially acyl groups in sn1 position. In parallel, may have a minor phospholipase 2 activity acting on acyl groups in position sn2. In addition to (C14)-containing phosphatidylcholines, may also act on other medium-chain-containing and oxidatively truncated phospholipids. This chain is Phospholipase ABHD3, found in Homo sapiens (Human).